A 129-amino-acid chain; its full sequence is Histone H2A type 2-C (129 aa).

Positions 1-22 (MSGRGKQGGKARAKAKSRSSRA) are disordered. Position 2 is an N-acetylserine (Ser2). At Ser2 the chain carries Phosphoserine; by RPS6KA5. Arg4 is modified (citrulline; alternate). Residue Arg4 is modified to Symmetric dimethylarginine; by PRMT5; alternate. Residues Lys6 and Lys10 each carry the N6-(2-hydroxyisobutyryl)lysine; alternate modification. Position 6 is an N6-acetyllysine; alternate (Lys6). Residues 7-19 (QGGKARAKAKSRS) are compositionally biased toward basic residues. Lys10 is subject to N6-lactoyllysine; alternate. N6-succinyllysine; alternate is present on Lys10. Residues Lys14 and Lys16 each participate in a glycyl lysine isopeptide (Lys-Gly) (interchain with G-Cter in ubiquitin) cross-link. Lys37 is subject to N6-(2-hydroxyisobutyryl)lysine; alternate. Residue Lys37 is modified to N6-(beta-hydroxybutyryl)lysine; alternate. The residue at position 37 (Lys37) is an N6-crotonyllysine; alternate. Residues Lys75 and Lys76 each carry the N6-(2-hydroxyisobutyryl)lysine modification. Lys96 bears the N6-(2-hydroxyisobutyryl)lysine; alternate mark. Lys96 is modified (N6-succinyllysine; alternate). The residue at position 96 (Lys96) is an N6-glutaryllysine; alternate. Lys100 bears the N6-glutaryllysine mark. Residue Gln105 is modified to N5-methylglutamine. Position 119 is an N6-(2-hydroxyisobutyryl)lysine; alternate (Lys119). Lys119 and Lys120 each carry N6-crotonyllysine; alternate. 2 positions are modified to N6-glutaryllysine; alternate: Lys119 and Lys120. Lys120 is covalently cross-linked (Glycyl lysine isopeptide (Lys-Gly) (interchain with G-Cter in ubiquitin); alternate). Residue Thr121 is modified to Phosphothreonine; by DCAF1. A Phosphoserine modification is found at Ser123. Position 125 is an N6-crotonyllysine (Lys125).

It belongs to the histone H2A family. The nucleosome is a histone octamer containing two molecules each of H2A, H2B, H3 and H4 assembled in one H3-H4 heterotetramer and two H2A-H2B heterodimers. The octamer wraps approximately 147 bp of DNA. Deiminated on Arg-4 in granulocytes upon calcium entry. In terms of processing, monoubiquitination of Lys-120 (H2AK119Ub) by RING1, TRIM37 and RNF2/RING2 complex gives a specific tag for epigenetic transcriptional repression and participates in X chromosome inactivation of female mammals. It is involved in the initiation of both imprinted and random X inactivation. Ubiquitinated H2A is enriched in inactive X chromosome chromatin. Ubiquitination of H2A functions downstream of methylation of 'Lys-27' of histone H3 (H3K27me). H2AK119Ub by RNF2/RING2 can also be induced by ultraviolet and may be involved in DNA repair. Following DNA double-strand breaks (DSBs), it is ubiquitinated through 'Lys-63' linkage of ubiquitin moieties by the E2 ligase UBE2N and the E3 ligases RNF8 and RNF168, leading to the recruitment of repair proteins to sites of DNA damage. Ubiquitination at Lys-14 and Lys-16 (H2AK13Ub and H2AK15Ub, respectively) in response to DNA damage is initiated by RNF168 that mediates monoubiquitination at these 2 sites, and 'Lys-63'-linked ubiquitin are then conjugated to monoubiquitin; RNF8 is able to extend 'Lys-63'-linked ubiquitin chains in vitro. H2AK119Ub and ionizing radiation-induced 'Lys-63'-linked ubiquitination (H2AK13Ub and H2AK15Ub) are distinct events. Post-translationally, phosphorylation on Ser-2 (H2AS1ph) is enhanced during mitosis. Phosphorylation on Ser-2 by RPS6KA5/MSK1 directly represses transcription. Acetylation of H3 inhibits Ser-2 phosphorylation by RPS6KA5/MSK1. Phosphorylation at Thr-121 (H2AT120ph) by DCAF1 is present in the regulatory region of many tumor suppresor genes and down-regulates their transcription. Symmetric dimethylation on Arg-4 by the PRDM1/PRMT5 complex may play a crucial role in the germ-cell lineage. In terms of processing, glutamine methylation at Gln-105 (H2AQ104me) by FBL is specifically dedicated to polymerase I. It is present at 35S ribosomal DNA locus and impairs binding of the FACT complex. Post-translationally, crotonylation (Kcr) is specifically present in male germ cells and marks testis-specific genes in post-meiotic cells, including X-linked genes that escape sex chromosome inactivation in haploid cells. Crotonylation marks active promoters and enhancers and confers resistance to transcriptional repressors. It is also associated with post-meiotically activated genes on autosomes. Lactylated in macrophages by EP300/P300 by using lactoyl-CoA directly derived from endogenous or exogenous lactate, leading to stimulates gene transcription.

It is found in the nucleus. Its subcellular location is the chromosome. Functionally, core component of nucleosome. Nucleosomes wrap and compact DNA into chromatin, limiting DNA accessibility to the cellular machineries which require DNA as a template. Histones thereby play a central role in transcription regulation, DNA repair, DNA replication and chromosomal stability. DNA accessibility is regulated via a complex set of post-translational modifications of histones, also called histone code, and nucleosome remodeling. This is Histone H2A type 2-C from Bos taurus (Bovine).